A 211-amino-acid chain; its full sequence is Guanylate kinase (211 aa).

The Guanylate kinase-like domain occupies 5 to 184 (GLLIVFSGPS…AAERVKRIIE (180 aa)). 12-19 (GPSGVGKG) is an ATP binding site.

The protein belongs to the guanylate kinase family.

It is found in the cytoplasm. The enzyme catalyses GMP + ATP = GDP + ADP. In terms of biological role, essential for recycling GMP and indirectly, cGMP. This is Guanylate kinase from Streptococcus pyogenes serotype M1.